We begin with the raw amino-acid sequence, 209 residues long: Large ribosomal subunit protein eL13 (209 aa).

It belongs to the eukaryotic ribosomal protein eL13 family. In terms of assembly, component of the 60S large ribosomal subunit (LSU).

The protein resides in the cytoplasm. Component of the ribosome, a large ribonucleoprotein complex responsible for the synthesis of proteins in the cell. The small ribosomal subunit (SSU) binds messenger RNAs (mRNAs) and translates the encoded message by selecting cognate aminoacyl-transfer RNA (tRNA) molecules. The large subunit (LSU) contains the ribosomal catalytic site termed the peptidyl transferase center (PTC), which catalyzes the formation of peptide bonds, thereby polymerizing the amino acids delivered by tRNAs into a polypeptide chain. The nascent polypeptides leave the ribosome through a tunnel in the LSU and interact with protein factors that function in enzymatic processing, targeting, and the membrane insertion of nascent chains at the exit of the ribosomal tunnel. As part of the LSU, it is probably required for its formation and the maturation of rRNAs. The chain is Large ribosomal subunit protein eL13 (rpl13) from Dictyostelium discoideum (Social amoeba).